The chain runs to 135 residues: Small ribosomal subunit protein uS12 (135 aa).

The tract at residues 1 to 23 is disordered; it reads MPTINQLVRKGRHSKTTKSDSPA. Asp102 carries the post-translational modification 3-methylthioaspartic acid.

Belongs to the universal ribosomal protein uS12 family. In terms of assembly, part of the 30S ribosomal subunit. Contacts proteins S8 and S17. May interact with IF1 in the 30S initiation complex.

With S4 and S5 plays an important role in translational accuracy. Functionally, interacts with and stabilizes bases of the 16S rRNA that are involved in tRNA selection in the A site and with the mRNA backbone. Located at the interface of the 30S and 50S subunits, it traverses the body of the 30S subunit contacting proteins on the other side and probably holding the rRNA structure together. The combined cluster of proteins S8, S12 and S17 appears to hold together the shoulder and platform of the 30S subunit. The polypeptide is Small ribosomal subunit protein uS12 (Lactobacillus gasseri (strain ATCC 33323 / DSM 20243 / BCRC 14619 / CIP 102991 / JCM 1131 / KCTC 3163 / NCIMB 11718 / NCTC 13722 / AM63)).